An 89-amino-acid polypeptide reads, in one-letter code: Putative regulatory protein PCC8801_0196 (89 aa).

The protein belongs to the RemA family.

This is Putative regulatory protein PCC8801_0196 from Rippkaea orientalis (strain PCC 8801 / RF-1) (Cyanothece sp. (strain PCC 8801)).